Reading from the N-terminus, the 1196-residue chain is Phosphoglucan, water dikinase, chloroplastic (1196 aa).

Residues 1-54 constitute a chloroplast transit peptide; that stretch reads MESIGSHCCSSPFTFITRNSSSSLPRLVNITHRVNLSHQSHRLRNSNSRLTCTA. At threonine 55 the chain carries N-acetylthreonine. Residues 66 to 166 enclose the CBM20 domain; that stretch reads KKDGSGTKVR…NFSVVCHWDA (101 aa). The segment at 174–200 is disordered; that stretch reads PQEVGNDDDVGDGGHERDNHDVGDDRV. Over residues 185-200 the composition is skewed to basic and acidic residues; that stretch reads DGGHERDNHDVGDDRV. Histidine 759 functions as the Tele-phosphohistidine intermediate in the catalytic mechanism. The interval 804–855 is disordered; it reads LSTEGRSRTSKSSATKKTDKNSLSKKKTDKKSLSIDDEESKPGSSSSNSLLY.

Belongs to the PEP-utilizing enzyme family. As to quaternary structure, homodimer. It depends on Mg(2+) as a cofactor. In terms of tissue distribution, in all starch containing tissues (e.g. roots, leaves, stems, inflorescence and siliques).

Its subcellular location is the plastid. It is found in the chloroplast. It catalyses the reaction [(1-&gt;4)-6-phospho-alpha-D-glucosyl](n) + n ATP + n H2O = [(1-&gt;4)-3,6-bisphospho-alpha-D-glucosyl](n) + n AMP + n phosphate + 2n H(+). Functionally, mediates the incorporation of phosphate into starch-like phospho-alpha-glucan, mostly at the C-3 position of glucose units. Required for starch degradation, suggesting that the phosphate content of starch regulates its degradability. The sequence is that of Phosphoglucan, water dikinase, chloroplastic (GWD3) from Arabidopsis thaliana (Mouse-ear cress).